We begin with the raw amino-acid sequence, 480 residues long: Voltage-gated potassium channel regulatory subunit KCNG2 (480 aa).

Disordered stretches follow at residues 1–25 and 144–167; these read MARL…GRGG and AAEA…LGSG. Residues 1-187 are Cytoplasmic-facing; that stretch reads MARLPGHPEV…DVVENPHSGL (187 aa). Residues 188-209 form a helical membrane-spanning segment; sequence AGKLFAYVSVAFVAVTAVGLCL. At 210-230 the chain is on the extracellular side; that stretch reads STMPDVRAEEERGECSTKCRN. The helical transmembrane segment at 231 to 252 threads the bilayer; the sequence is LFVLETVCVAWFSFEFLLRSLQ. At 253–263 the chain is on the cytoplasmic side; it reads AESKCAFLRTP. Residues 264–284 traverse the membrane as a helical segment; it reads LAIIDILAILPFYVSLLAGLA. Residues 285–296 lie on the Extracellular side of the membrane; it reads AGPTGSKMLERA. Residues 297 to 317 traverse the membrane as a helical; Voltage-sensor segment; sequence GLVLRLLRALRVLYVMRLARH. Topologically, residues 318–332 are cytoplasmic; the sequence is SLGLRSLGLTVRRCA. A helical membrane pass occupies residues 333–354; sequence REFGLLLLFLCVAMALFAPLVH. The Extracellular portion of the chain corresponds to 355–369; sequence LAERELGAHRDFSSV. The segment at residues 370–381 is an intramembrane region (helical); the sequence is PASYWWAVISMT. The Selectivity filter motif lies at 382 to 387; it reads TVGYGD. The stretch at 382-389 is an intramembrane region; that stretch reads TVGYGDMV. At 390–396 the chain is on the extracellular side; that stretch reads PRSLPGQ. A helical transmembrane segment spans residues 397–425; it reads VVALSSILSGILLMAFPVTSIFHTFSRSY. At 426-480 the chain is on the cytoplasmic side; the sequence is SELKEQQQRAASPEPVLREDSTRDDSTRSASATEDSSQDPETAGAAGSLPGPVGP. The interval 429 to 480 is disordered; the sequence is KEQQQRAASPEPVLREDSTRDDSTRSASATEDSSQDPETAGAAGSLPGPVGP. Residues 441-452 show a composition bias toward basic and acidic residues; the sequence is VLREDSTRDDST.

This sequence belongs to the potassium channel family. G (TC 1.A.1.2) subfamily. Kv6.2/KCNG2 sub-subfamily. Heterodimer with KCNB1. As to expression, highly expressed in heart, in particular in right and left atrium, and detected at lower levels in the right and left ventricle.

The protein localises to the cell membrane. Functionally, regulatory alpha-subunit of the voltage-gated potassium (Kv) channel which, when coassembled with KCNB1, can modulate the kinetics and conductance-voltage relationship. Modulates channel activity by shifting the threshold and the half-maximal activation to more negative values. Potassium channel subunit that does not form functional channels by itself. The chain is Voltage-gated potassium channel regulatory subunit KCNG2 from Rattus norvegicus (Rat).